The chain runs to 352 residues: Palmitoyltransferase PFA5 (352 aa).

Helical transmembrane passes span Tyr12 to Ala32 and Ile53 to Ile73. Residues Val114–Phe164 form the DHHC domain. The S-palmitoyl cysteine intermediate role is filled by Cys144. The next 2 helical transmembrane spans lie at Phe159–Val179 and Leu195–Ser215.

This sequence belongs to the DHHC palmitoyltransferase family. PFA5 subfamily.

The protein resides in the membrane. The catalysed reaction is L-cysteinyl-[protein] + hexadecanoyl-CoA = S-hexadecanoyl-L-cysteinyl-[protein] + CoA. In Candida glabrata (strain ATCC 2001 / BCRC 20586 / JCM 3761 / NBRC 0622 / NRRL Y-65 / CBS 138) (Yeast), this protein is Palmitoyltransferase PFA5 (PFA5).